The chain runs to 260 residues: NAD-capped RNA hydrolase NudC (260 aa).

2 residues coordinate substrate: K25 and R69. C98 and C101 together coordinate Zn(2+). E111 provides a ligand contact to substrate. Residues C116 and C119 each contribute to the Zn(2+) site. Y124 lines the substrate pocket. Positions P125–T248 constitute a Nudix hydrolase domain. 3 residues coordinate a divalent metal cation: A158, E174, and E178. The Nudix box motif lies at G159–N180. Substrate is bound at residue Q192–S199. E219 lines the a divalent metal cation pocket. A241 serves as a coordination point for substrate.

This sequence belongs to the Nudix hydrolase family. NudC subfamily. In terms of assembly, homodimer. The cofactor is Mg(2+). Mn(2+) serves as cofactor. Requires Zn(2+) as cofactor.

The enzyme catalyses a 5'-end NAD(+)-phospho-ribonucleoside in mRNA + H2O = a 5'-end phospho-adenosine-phospho-ribonucleoside in mRNA + beta-nicotinamide D-ribonucleotide + 2 H(+). It carries out the reaction NAD(+) + H2O = beta-nicotinamide D-ribonucleotide + AMP + 2 H(+). It catalyses the reaction NADH + H2O = reduced beta-nicotinamide D-ribonucleotide + AMP + 2 H(+). Functionally, mRNA decapping enzyme that specifically removes the nicotinamide adenine dinucleotide (NAD) cap from a subset of mRNAs by hydrolyzing the diphosphate linkage to produce nicotinamide mononucleotide (NMN) and 5' monophosphate mRNA. The NAD-cap is present at the 5'-end of some mRNAs and stabilizes RNA against 5'-processing. Has preference for mRNAs with a 5'-end purine. Catalyzes the hydrolysis of a broad range of dinucleotide pyrophosphates. The chain is NAD-capped RNA hydrolase NudC from Yersinia pseudotuberculosis serotype O:1b (strain IP 31758).